Consider the following 429-residue polypeptide: Glutamate-1-semialdehyde 2,1-aminomutase 2 (429 aa).

An N6-(pyridoxal phosphate)lysine modification is found at lysine 268.

The protein belongs to the class-III pyridoxal-phosphate-dependent aminotransferase family. HemL subfamily. Homodimer. Requires pyridoxal 5'-phosphate as cofactor.

Its subcellular location is the cytoplasm. It catalyses the reaction (S)-4-amino-5-oxopentanoate = 5-aminolevulinate. Its pathway is porphyrin-containing compound metabolism; protoporphyrin-IX biosynthesis; 5-aminolevulinate from L-glutamyl-tRNA(Glu): step 2/2. The protein is Glutamate-1-semialdehyde 2,1-aminomutase 2 of Staphylococcus aureus (strain Mu50 / ATCC 700699).